Consider the following 190-residue polypeptide: Cytoglobin (190 aa).

The Globin domain maps to 18–167 (ELSEAERKAV…IYSHVTAAYK (150 aa)). An intrachain disulfide couples Cys38 to Cys83. Heme b is bound by residues His81 and His113.

The protein belongs to the globin family. Monomeric. Homodimer; disulfide-linked in vitro. Also homooligomeric in vitro. The formation of an intramolecular disulfide bond between cysteines Cys-38 and Cys-83 specifically enhances the nitrite reductase activity. Widely expressed. Highest expression in heart, stomach, bladder and small intestine.

Its subcellular location is the cytoplasm. It is found in the nucleus. It catalyses the reaction Fe(II)-heme b-[protein] + nitric oxide + O2 = Fe(III)-heme b-[protein] + nitrate. It carries out the reaction Fe(III)-heme b-[protein] + nitric oxide + H2O = Fe(II)-heme b-[protein] + nitrite + 2 H(+). The enzyme catalyses 2 superoxide + 2 H(+) = H2O2 + O2. The catalysed reaction is H2O2 + AH2 = A + 2 H2O. With respect to regulation, the nitric oxide dioxygenase activity is activated by a reducing system composed of cytochrome b5, its upstream reductase CYB5R3 and NADH. In terms of biological role, probable multifunctional globin with a hexacoordinated heme iron required for the catalysis of various reactions depending on redox condition of the cell as well as oxygen availability. Has a nitric oxide dioxygenase (NOD) activity and is most probably involved in cell-mediated and oxygen-dependent nitric oxide consumption. By scavenging this second messenger may regulate several biological processes including endothelium-mediated vasodilation and vascular tone. Under normoxic conditions functions as a nitric oxide dioxygenase (NOD) but under hypoxic conditions the globin may switch its function to that of a nitrite (NO2) reductase (NiR), generating nitric oxide. Could also have peroxidase and superoxide dismutase activities, detoxifying reactive oxygen species and protecting cells against oxidative stress. Also binds dioxygen with low affinity and could function as an oxygen sensor but has probably no function as a respiratory oxygen carrier. This chain is Cytoglobin, found in Homo sapiens (Human).